The sequence spans 606 residues: UvrABC system protein C (606 aa).

Residues 14 to 93 form the GIY-YIG domain; the sequence is QNPGVYLMKD…IKKHSPRYNV (80 aa). Positions 203-238 constitute a UVR domain; that stretch reads PDLINRLKFEMQTEADLEHFERAAQIRDTILAIQTT.

Belongs to the UvrC family. Interacts with UvrB in an incision complex.

It localises to the cytoplasm. The UvrABC repair system catalyzes the recognition and processing of DNA lesions. UvrC both incises the 5' and 3' sides of the lesion. The N-terminal half is responsible for the 3' incision and the C-terminal half is responsible for the 5' incision. This chain is UvrABC system protein C, found in Desulforapulum autotrophicum (strain ATCC 43914 / DSM 3382 / VKM B-1955 / HRM2) (Desulfobacterium autotrophicum).